The chain runs to 348 residues: UPF0283 membrane protein PMI1371 (348 aa).

The next 2 membrane-spanning stretches (helical) occupy residues 69 to 89 (LITV…GQWI) and 99 to 119 (IALG…GSVI).

Belongs to the UPF0283 family.

It is found in the cell inner membrane. This chain is UPF0283 membrane protein PMI1371, found in Proteus mirabilis (strain HI4320).